We begin with the raw amino-acid sequence, 309 residues long: Large ribosomal subunit protein mL45 (309 aa).

This sequence belongs to the mitochondrion-specific ribosomal protein mL45 family. As to quaternary structure, component of the mitochondrial ribosome large subunit (39S) which comprises a 16S rRNA and about 50 distinct proteins.

The protein localises to the mitochondrion. Component of the mitochondrial large ribosomal subunit (mt-LSU). Within the mitochondrial ribosomes, required to direct the nascent polypeptide toward the tunnel exit and position the exit at a distance from the membrane surface. The sequence is that of Large ribosomal subunit protein mL45 (mrpl45) from Xenopus tropicalis (Western clawed frog).